Consider the following 399-residue polypeptide: uncharacterized protein (399 aa).

Helical transmembrane passes span 26–46 (LLTI…ISLG), 266–286 (VITI…AVGI), 301–321 (IGIL…FVVE), 324–344 (FLGL…AEVI), and 358–378 (AWIS…VGVI).

This sequence belongs to the ABC-4 integral membrane protein family.

It localises to the cell membrane. This is an uncharacterized protein from Methanocaldococcus jannaschii (strain ATCC 43067 / DSM 2661 / JAL-1 / JCM 10045 / NBRC 100440) (Methanococcus jannaschii).